The primary structure comprises 251 residues: Pyruvate formate-lyase-activating enzyme (251 aa).

One can recognise a Radical SAM core domain in the interval 15 to 244 (VDGPGLRYIL…KEAYRYVNFN (230 aa)). Residues Cys29, Cys33, and Cys36 each coordinate [4Fe-4S] cluster. S-adenosyl-L-methionine is bound by residues 35–37 (YCH), Gly79, 134–136 (DIK), and His207.

Belongs to the organic radical-activating enzymes family. [4Fe-4S] cluster is required as a cofactor.

It is found in the cytoplasm. The catalysed reaction is glycyl-[formate C-acetyltransferase] + reduced [flavodoxin] + S-adenosyl-L-methionine = glycin-2-yl radical-[formate C-acetyltransferase] + semiquinone [flavodoxin] + 5'-deoxyadenosine + L-methionine + H(+). Activation of pyruvate formate-lyase under anaerobic conditions by generation of an organic free radical, using S-adenosylmethionine and reduced flavodoxin as cosubstrates to produce 5'-deoxy-adenosine. The chain is Pyruvate formate-lyase-activating enzyme (pflA) from Staphylococcus epidermidis (strain ATCC 12228 / FDA PCI 1200).